Here is a 625-residue protein sequence, read N- to C-terminus: tRNA uridine 5-carboxymethylaminomethyl modification enzyme MnmG (625 aa).

Residue 11–16 (GAGHAG) participates in FAD binding. Position 271-285 (271-285 (GPRYCPSIETKIVTF)) interacts with NAD(+).

The protein belongs to the MnmG family. As to quaternary structure, homodimer. Heterotetramer of two MnmE and two MnmG subunits. The cofactor is FAD.

Its subcellular location is the cytoplasm. In terms of biological role, NAD-binding protein involved in the addition of a carboxymethylaminomethyl (cmnm) group at the wobble position (U34) of certain tRNAs, forming tRNA-cmnm(5)s(2)U34. This chain is tRNA uridine 5-carboxymethylaminomethyl modification enzyme MnmG, found in Porphyromonas gingivalis (strain ATCC BAA-308 / W83).